The chain runs to 139 residues: Iron-sulfur cluster assembly 1 homolog, mitochondrial (139 aa).

Fe cation contacts are provided by Cys52, Cys117, and Cys119.

It belongs to the HesB/IscA family.

Its subcellular location is the mitochondrion. Functionally, involved in the assembly of mitochondrial iron-sulfur proteins. Probably involved in the binding of an intermediate of Fe/S cluster assembly. The protein is Iron-sulfur cluster assembly 1 homolog, mitochondrial (isca1) of Dictyostelium discoideum (Social amoeba).